The primary structure comprises 571 residues: MSAILSADDLNDFISPGVACIKPVETLPAAKPSADNELEISFNTDAPLPSDLPPAQISLTDCLACSGCVTSAEAVLVSLQSHAEVLSQLDSAPGLRLYKNATGTGIKVEGVEQGGKIYVASVSPQSRASIAATFGVTEREAGYMIEHLLSGPKGIKNRAVYRNAFQWVVDTNITREACLVLGAEEVIASMTDTGSKKPVLTSSCPGWVCYAEKTHPHVLPHLSRMKSPQALMGTLIKTTLSRKLGISPDRIWHVAVMPCFDKKLEASREELTDAVWEGTGTRGVRDVDSVITSKELLMLADSRGIEFSKLPRTPIPTSSRIPFPDTKIDSFLFPSNRKGSGNGNRDAGTSGGNLHYALHYFASQHKGSSIQTIKGRNVDVVDYTVVAENGEILLKAARYYGFRNIQNLVRRLKPAKPSRMPGGKPIGSARRPNGKASGPDYSYVEVMACPGGCTNGGGQIKVDDPINTSRLEGDAKAGPQEQKMWLAQVDEAYFSGEDNVESSSVDDRNDLVEGISPSYIKDTLSHWAATTGLDLERLVYTTYREVVSDVGKNVGDAERVIEIAGKIGGGW.

Cysteine 20, cysteine 62, cysteine 65, cysteine 68, cysteine 204, and cysteine 259 together coordinate [4Fe-4S] cluster. The disordered stretch occupies residues 415–437; sequence AKPSRMPGGKPIGSARRPNGKAS. 2 residues coordinate [4Fe-4S] cluster: cysteine 449 and cysteine 453.

Belongs to the NARF family.

In terms of biological role, component of the cytosolic Fe/S protein assembly machinery. Required for maturation of extramitochondrial Fe/S proteins. May play a role in the transfer of pre-assembled Fe/S clusters to target apoproteins. The sequence is that of Cytosolic Fe-S cluster assembly factor NAR1 (NAR1) from Sclerotinia sclerotiorum (strain ATCC 18683 / 1980 / Ss-1) (White mold).